The primary structure comprises 79 residues: MDTKQGVLDILNDLTGEDLSDQMDENIFDNGLMDSMASVQMLLSLQEKFDIDVPVSEFNRAEWDTPNKIVAKVESLENE.

Positions 1 to 77 (MDTKQGVLDI…KIVAKVESLE (77 aa)) constitute a Carrier domain. Position 35 is an O-(pantetheine 4'-phosphoryl)serine (S35).

It belongs to the DltC family. 4'-phosphopantetheine is transferred from CoA to a specific serine of apo-DCP.

The protein localises to the cytoplasm. It participates in cell wall biogenesis; lipoteichoic acid biosynthesis. In terms of biological role, carrier protein involved in the D-alanylation of lipoteichoic acid (LTA). The loading of thioester-linked D-alanine onto DltC is catalyzed by D-alanine--D-alanyl carrier protein ligase DltA. The DltC-carried D-alanyl group is further transferred to cell membrane phosphatidylglycerol (PG) by forming an ester bond, probably catalyzed by DltD. D-alanylation of LTA plays an important role in modulating the properties of the cell wall in Gram-positive bacteria, influencing the net charge of the cell wall. The protein is D-alanyl carrier protein of Lactobacillus helveticus (strain DPC 4571).